Reading from the N-terminus, the 469-residue chain is Protein POLLENLESS 3-LIKE 1 (469 aa).

The disordered stretch occupies residues 1 to 20 (MRRRESRGAKGGGFLTPPPS). TPR repeat units lie at residues 88–121 (DSAL…CPFE), 124–157 (DSID…LEQD), and 184–217 (ARIL…EPDN). The stretch at 139 to 191 (RITEVAELLEHKLRTLEQDKHYGGRIKIAKRSHEEQNNKTIEQEKARILGNLA) forms a coiled coil. Residues 314–338 (NIHKTNSHASSESVEQNSPGLTTQP) show a composition bias toward polar residues. The segment at 314–339 (NIHKTNSHASSESVEQNSPGLTTQPR) is disordered.

This sequence belongs to the MS5 protein family. In terms of tissue distribution, expressed in floral and vegetative organs. Also barely detectable in leaves and stems.

The protein resides in the nucleus. Probably involved in the regulation of cell division. The polypeptide is Protein POLLENLESS 3-LIKE 1 (Arabidopsis thaliana (Mouse-ear cress)).